Consider the following 44-residue polypeptide: Conotoxin Fi11.11 (44 aa).

Cystine bridges form between Cys-1-Cys-15, Cys-8-Cys-20, Cys-14-Cys-24, and Cys-19-Cys-28. An Asparagine amide modification is found at Asn-30. Residues 35–44 (QVPLKSFGQR) constitute a propeptide that is removed on maturation.

Belongs to the conotoxin I2 superfamily. Expressed by the venom duct.

It localises to the secreted. The sequence is that of Conotoxin Fi11.11 from Conus figulinus (Fig cone).